We begin with the raw amino-acid sequence, 347 residues long: Phosphoribosylformylglycinamidine cyclo-ligase (347 aa).

This sequence belongs to the AIR synthase family.

It localises to the cytoplasm. It catalyses the reaction 2-formamido-N(1)-(5-O-phospho-beta-D-ribosyl)acetamidine + ATP = 5-amino-1-(5-phospho-beta-D-ribosyl)imidazole + ADP + phosphate + H(+). It participates in purine metabolism; IMP biosynthesis via de novo pathway; 5-amino-1-(5-phospho-D-ribosyl)imidazole from N(2)-formyl-N(1)-(5-phospho-D-ribosyl)glycinamide: step 2/2. In Prochlorococcus marinus subsp. pastoris (strain CCMP1986 / NIES-2087 / MED4), this protein is Phosphoribosylformylglycinamidine cyclo-ligase.